The following is a 476-amino-acid chain: UDP-glucose 6-dehydrogenase (476 aa).

NAD(+) contacts are provided by residues 7–12 (GAGYVG), Asp-32, Arg-37, 85–89 (VNTPT), 126–127 (ST), and Glu-161. Substrate is bound by residues 157 to 161 (EFLAE), 216 to 220 (KLAAN), Arg-256, and 263 to 269 (QASVGFG). Cys-272 (nucleophile) is an active-site residue. 272 to 275 (CFQK) provides a ligand contact to NAD(+). Substrate is bound at residue 334-335 (FK). Arg-342 contributes to the NAD(+) binding site. Arg-439 contributes to the substrate binding site.

This sequence belongs to the UDP-glucose/GDP-mannose dehydrogenase family.

It catalyses the reaction UDP-alpha-D-glucose + 2 NAD(+) + H2O = UDP-alpha-D-glucuronate + 2 NADH + 3 H(+). It participates in nucleotide-sugar biosynthesis; UDP-alpha-D-glucuronate biosynthesis; UDP-alpha-D-glucuronate from UDP-alpha-D-glucose: step 1/1. Functionally, involved in the biosynthesis of glycosaminoglycans; hyaluronan, chondroitin sulfate and heparan sulfate. Required for wingless signaling in different tissues. The polypeptide is UDP-glucose 6-dehydrogenase (sgl) (Drosophila melanogaster (Fruit fly)).